The following is a 325-amino-acid chain: Malate dehydrogenase (325 aa).

Residues 10–15 (GAGNVG) and Asp-34 contribute to the NAD(+) site. Residues Arg-88 and Arg-94 each coordinate substrate. NAD(+)-binding positions include Asn-101 and 124 to 126 (VSN). Substrate contacts are provided by Asn-126 and Arg-157. His-181 functions as the Proton acceptor in the catalytic mechanism.

Belongs to the LDH/MDH superfamily.

It carries out the reaction (S)-malate + NAD(+) = oxaloacetate + NADH + H(+). In terms of biological role, catalyzes the reversible oxidation of malate to oxaloacetate. This is Malate dehydrogenase (mdh) from Thermoplasma volcanium (strain ATCC 51530 / DSM 4299 / JCM 9571 / NBRC 15438 / GSS1).